Here is an 830-residue protein sequence, read N- to C-terminus: Periplasmic nitrate reductase 2 (830 aa).

Positions 1–31 (MKVSRRKFIKAQAVASAAAAAGISIPISASN) form a signal peptide, tat-type signal. In terms of domain architecture, 4Fe-4S Mo/W bis-MGD-type spans 41-97 (ITWEKAPCRFCGTGCSVNVGTKEGKVVATHGDIKSPVNRGLNCVKGYFLSKIMYGKD). [4Fe-4S] cluster-binding residues include Cys48, Cys51, Cys55, and Cys83. Mo-bis(molybdopterin guanine dinucleotide) contacts are provided by residues Lys85, Gln152, Asn177, Cys181, 245–249 (STFEH), 264–266 (QSD), Met374, Gln378, Asn484, 510–511 (SE), Lys533, Asp560, and 720–729 (TGRVIEHWHS). Position 796 (Trp796) interacts with substrate. Mo-bis(molybdopterin guanine dinucleotide) contacts are provided by Asn804 and Lys821.

It belongs to the prokaryotic molybdopterin-containing oxidoreductase family. NasA/NapA/NarB subfamily. Component of the periplasmic nitrate reductase NapAB complex composed of NapA and NapB. The cofactor is [4Fe-4S] cluster. Mo-bis(molybdopterin guanine dinucleotide) serves as cofactor. In terms of processing, predicted to be exported by the Tat system. The position of the signal peptide cleavage has not been experimentally proven.

The protein localises to the periplasm. The enzyme catalyses 2 Fe(II)-[cytochrome] + nitrate + 2 H(+) = 2 Fe(III)-[cytochrome] + nitrite + H2O. In terms of biological role, catalytic subunit of the periplasmic nitrate reductase complex NapAB. Receives electrons from NapB and catalyzes the reduction of nitrate to nitrite. This chain is Periplasmic nitrate reductase 2, found in Photobacterium profundum (strain SS9).